A 386-amino-acid polypeptide reads, in one-letter code: Ribosomal RNA small subunit methyltransferase H (386 aa).

S-adenosyl-L-methionine contacts are provided by residues 97–99 (GGH), aspartate 116, tyrosine 143, aspartate 167, and glutamine 174.

Belongs to the methyltransferase superfamily. RsmH family.

It is found in the cytoplasm. It catalyses the reaction cytidine(1402) in 16S rRNA + S-adenosyl-L-methionine = N(4)-methylcytidine(1402) in 16S rRNA + S-adenosyl-L-homocysteine + H(+). Specifically methylates the N4 position of cytidine in position 1402 (C1402) of 16S rRNA. This is Ribosomal RNA small subunit methyltransferase H from Mycolicibacterium paratuberculosis (strain ATCC BAA-968 / K-10) (Mycobacterium paratuberculosis).